Consider the following 829-residue polypeptide: DNA ligase (829 aa).

The interval 1 to 23 (MPAQTSRARPVEEMTAAQAREAH) is disordered. Residues 47 to 51 (DAEYD), 96 to 97 (SL), and Glu-130 each bind NAD(+). Lys-132 functions as the N6-AMP-lysine intermediate in the catalytic mechanism. Arg-153, Glu-190, Lys-306, and Lys-330 together coordinate NAD(+). 4 residues coordinate Zn(2+): Cys-453, Cys-456, Cys-477, and Cys-483. The BRCT domain maps to 750–829 (AAAAVFSGQT…AEWLAMVEAA (80 aa)).

Belongs to the NAD-dependent DNA ligase family. LigA subfamily. It depends on Mg(2+) as a cofactor. Mn(2+) serves as cofactor.

The enzyme catalyses NAD(+) + (deoxyribonucleotide)n-3'-hydroxyl + 5'-phospho-(deoxyribonucleotide)m = (deoxyribonucleotide)n+m + AMP + beta-nicotinamide D-nucleotide.. DNA ligase that catalyzes the formation of phosphodiester linkages between 5'-phosphoryl and 3'-hydroxyl groups in double-stranded DNA using NAD as a coenzyme and as the energy source for the reaction. It is essential for DNA replication and repair of damaged DNA. This is DNA ligase from Methylobacterium nodulans (strain LMG 21967 / CNCM I-2342 / ORS 2060).